The sequence spans 598 residues: F-box/WD repeat-containing protein 8 (598 aa).

The residue at position 1 (Met-1) is an N-acetylmethionine. The disordered stretch occupies residues 17–93; the sequence is LAQAQAPKKR…RSPLAREGAG (77 aa). The segment covering 29–40 has biased composition (basic and acidic residues); the sequence is PEAAERRARRPE. The segment covering 61 to 71 has biased composition (low complexity); the sequence is EGAGRPPAARA. Phosphoserine is present on residues Ser-83 and Ser-85. Positions 113 to 159 constitute an F-box domain; it reads PFFDIQLPYELAINIFQYLDRKELGRCAQVSKTWKVIAEDEVLWYRL. WD repeat units follow at residues 201 to 250, 259 to 299, 300 to 340, 341 to 383, 384 to 429, 430 to 475, 476 to 513, and 514 to 561; these read AVSE…LESE, QPNV…FEHD, ARIQ…AEFE, VPKL…LLYA, HGPP…LKLG, NVLR…SAHQ, LRVS…EVYS, and GHPV…AYEF.

In terms of assembly, component of the Cul7-RING(FBXW8) complex consisting of CUL7, RBX1, SKP1 and FBXW8; within the complex interacts with CUL7 and SKP1. Interacts with GLMN isoform 1. Interacts with OBSL1, CUL1, CUL2, CCT6B, PFDN5, CCT2, CCT3, CCT6A, CCT7, VBP1, CCDC8, ARF1, TRIP13, PDCD5 and GORASP1. Interacts with MAP4K1/HPK1 (when autophosphorylated). Associated component of the 3M complex. Interacts with POUF51 (when phosphorylated on 'Ser-355'). Phosphorylation at Ser-85 by mTORC2 promotes FBXW8 stabilization, allowing its translocation to the cytosol in response to insulin.

It is found in the cytoplasm. The protein resides in the perinuclear region. Its subcellular location is the golgi apparatus. It participates in protein modification; protein ubiquitination. Its function is as follows. Substrate-recognition component of the Cul7-RING(FBXW8) ubiquitin ligase complex, which mediates the ubiquitination and subsequent proteasomal degradation of target proteins. The Cul7-RING(FBXW8) complex mediates ubiquitination and consequent degradation of GORASP1, acting as a component of the ubiquitin ligase pathway that regulates Golgi morphogenesis and dendrite patterning in brain. Mediates ubiquitination and degradation of IRS1 in a mTOR-dependent manner: the Cul7-RING(FBXW8) complex recognizes and binds IRS1 previously phosphorylated by S6 kinase (RPS6KB1 or RPS6KB2). The Cul7-RING(FBXW8) complex also mediates ubiquitination of MAP4K1/HPK1: recognizes and binds autophosphorylated MAP4K1/HPK1, leading to its degradation, thereby affecting cell proliferation and differentiation. The Cul7-RING(FBXW8) complex also mediates ubiquitination of phosphorylated cyclin-D1 (CCND1). The Cul7-RING(FBXW8) complex is however not a major regulator of CCND1 stability during the G1/S transition. Associated component of the 3M complex, suggesting that it mediates some of 3M complex functions. The protein is F-box/WD repeat-containing protein 8 of Homo sapiens (Human).